The chain runs to 75 residues: Exodeoxyribonuclease 7 small subunit (75 aa).

This sequence belongs to the XseB family. Heterooligomer composed of large and small subunits.

The protein resides in the cytoplasm. The catalysed reaction is Exonucleolytic cleavage in either 5'- to 3'- or 3'- to 5'-direction to yield nucleoside 5'-phosphates.. Bidirectionally degrades single-stranded DNA into large acid-insoluble oligonucleotides, which are then degraded further into small acid-soluble oligonucleotides. The sequence is that of Exodeoxyribonuclease 7 small subunit from Listeria monocytogenes serotype 4b (strain CLIP80459).